Reading from the N-terminus, the 661-residue chain is Protein WHI3 (661 aa).

Low complexity predominate over residues 14–31; it reads ASSSDNVVSSTTNTHNIS. The disordered stretch occupies residues 14–58; sequence ASSSDNVVSSTTNTHNISPSHRSSLNLNTTSHPHEASGRGSASGE. Over residues 32-44 the composition is skewed to polar residues; it reads PSHRSSLNLNTTS. Position 231 is a phosphoserine (Ser231). 3 stretches are compositionally biased toward low complexity: residues 237–272, 383–409, and 496–508; these read DPFS…SPQQ, NTSA…SASS, and KNNS…SNIT. 4 disordered regions span residues 237–280, 383–410, 469–508, and 613–661; these read DPFS…QVNS, NTSA…ASSQ, EHMY…SNIT, and SSKG…HIKN. Residues 538–625 enclose the RRM domain; that stretch reads NTLYVGNLPS…GGIRLSFSKN (88 aa). Low complexity predominate over residues 628 to 647; the sequence is GVRGPNSRRGGSGNPNPNVN. A compositionally biased stretch (polar residues) spans 648–661; the sequence is MLSSYNSNVGHIKN.

Functionally, involved in size control and cell cycle. In Saccharomyces cerevisiae (strain ATCC 204508 / S288c) (Baker's yeast), this protein is Protein WHI3 (WHI3).